A 354-amino-acid chain; its full sequence is Transcription factor HHO2 (354 aa).

A compositionally biased stretch (acidic residues) spans 93–102 (VQEEEEEDGE). The disordered stretch occupies residues 93–112 (VQEEEEEDGEHESSPELVNN). Residues 103-112 (HESSPELVNN) are compositionally biased toward basic and acidic residues. The region spanning 212–272 (THRKQRRCWS…HLQKYRLHTR (61 aa)) is the HTH myb-type domain. Residues 243–268 (PKQIRDHMKVDGLTNDEVKSHLQKYR) constitute a DNA-binding region (H-T-H motif). Positions 324–354 (VAQSPKRSLERSCNSPAASSSTNTNTSTPVS) are disordered. Low complexity predominate over residues 337 to 354 (NSPAASSSTNTNTSTPVS).

It is found in the nucleus. Probable transcription factor involved in phosphate homeostasis. Involved in the regulation of the developmental response of lateral roots, acquisition and/or mobilization of phosphate and expression of a subset of genes involved in phosphate sensing and signaling pathway. Is a target of the transcription factor PHR1. The chain is Transcription factor HHO2 from Arabidopsis thaliana (Mouse-ear cress).